We begin with the raw amino-acid sequence, 203 residues long: GTP cyclohydrolase-2 (203 aa).

Residue 49–53 (RIHSE) participates in GTP binding. Zn(2+) is bound by residues Cys54, Cys65, and Cys67. Residues Gln70, 92–94 (EGR), and Thr114 contribute to the GTP site. Asp126 serves as the catalytic Proton acceptor. The Nucleophile role is filled by Arg128. Positions 149 and 154 each coordinate GTP.

The protein belongs to the GTP cyclohydrolase II family. Zn(2+) is required as a cofactor.

The catalysed reaction is GTP + 4 H2O = 2,5-diamino-6-hydroxy-4-(5-phosphoribosylamino)-pyrimidine + formate + 2 phosphate + 3 H(+). It functions in the pathway cofactor biosynthesis; riboflavin biosynthesis; 5-amino-6-(D-ribitylamino)uracil from GTP: step 1/4. Catalyzes the conversion of GTP to 2,5-diamino-6-ribosylamino-4(3H)-pyrimidinone 5'-phosphate (DARP), formate and pyrophosphate. This chain is GTP cyclohydrolase-2, found in Shewanella sp. (strain W3-18-1).